The following is a 1334-amino-acid chain: Aldehyde oxidase 3 (1334 aa).

Residues 8-95 (DELIFFVNGK…GAAVTTVEGI (88 aa)) enclose the 2Fe-2S ferredoxin-type domain. Positions 47, 52, 55, and 77 each coordinate [2Fe-2S] cluster. Mo-molybdopterin is bound at residue Q116. 4 residues coordinate [2Fe-2S] cluster: C117, C120, C152, and C154. Residues 236–421 (FRGERTTWIA…ISVFVPLSRK (186 aa)) form the FAD-binding PCMH-type domain. 264–271 (LVIGNTCL) provides a ligand contact to FAD. Position 320 is a phosphoserine (S320). FAD-binding residues include S354, H358, D367, and L411. Mo-molybdopterin-binding residues include G801, L1042, and Q1198. E1265 functions as the Proton acceptor; for azaheterocycle hydroxylase activity in the catalytic mechanism.

Belongs to the xanthine dehydrogenase family. Homodimer. Requires [2Fe-2S] cluster as cofactor. FAD is required as a cofactor. Mo-molybdopterin serves as cofactor.

Its subcellular location is the cytoplasm. The enzyme catalyses an aldehyde + O2 + H2O = a carboxylate + H2O2 + H(+). Its function is as follows. Oxidase with broad substrate specificity, oxidizing aromatic azaheterocycles, such as N1-methylnicotinamide and phthalazine, as well as aldehydes, such as benzaldehyde, retinal and pyridoxal. Plays a key role in the metabolism of xenobiotics and drugs containing aromatic azaheterocyclic substituents. Is probably involved in the regulation of reactive oxygen species homeostasis. Is a prominent source of superoxide generation via the one-electron reduction of molecular oxygen. Also catalyzes nitric oxide (NO) production; under anaerobic conditions, reduces nitrite to NO with NADH or aldehyde as electron donor, but under aerobic conditions, NADH is the preferred substrate. These reactions may be catalyzed by several isozymes. This is Aldehyde oxidase 3 (Aox3) from Rattus norvegicus (Rat).